The chain runs to 686 residues: Amyloid-beta-like protein (686 aa).

A signal peptide spans M1–A21. At E22–Q621 the chain is on the extracellular side. Positions E32–H125 are GFLD subdomain. Residues E32–N197 form the E1 domain. 6 disulfide bridges follow: C42-C65, C76-C119, C101-C108, C135-C195, C146-C182, and C160-C194. N-linked (GlcNAc...) asparagine glycosylation occurs at N84. Positions H133–N197 are cuBD subdomain. A glycan (N-linked (GlcNAc...) asparagine) is linked at N201. Positions N201–F245 are disordered. The segment covering D211–S239 has biased composition (acidic residues). One can recognise an E2 domain in the interval S240 to Y440. A glycan (N-linked (GlcNAc...) asparagine) is linked at N249. Heparin-binding positions include N252–D255 and H382. A glycan (N-linked (GlcNAc...) asparagine) is linked at N417. Disordered stretches follow at residues P479–K526 and K550–E585. Positions S500 to E516 are enriched in acidic residues. Basic and acidic residues predominate over residues Q517 to K526. The span at T558–S567 shows a compositional bias: acidic residues. Residues P622–T642 form a helical membrane-spanning segment. Residues N643–A686 are Cytoplasmic-facing. Positions Y674–Y679 match the YENPXY motif motif.

This sequence belongs to the APP family. In terms of assembly, interacts (via cytoplasmic domain) with feh-1 (via PID 2 domain). Extracellular region is proteolytically cleaved. In terms of tissue distribution, expressed in the head, pharynx, spermatheca, uterus, vulva, tail and ventral neurons. Specifically expressed in nerve ring interneurons, the ventral cord, socket and amphids in the head, with strong expression in junctional cells, including the pharyngeal intestinal valve and uterine seam junction, and the excretory cell and weak expression in epidermal epithelial cells, including hyp7 cells, vulval cells, rectal valve cells, pharyngeal arcade cells and the tail hypodermis.

It is found in the membrane. It localises to the early endosome. In terms of biological role, required for normal developmental progression throughout all life stages. Specifically required for the molt stage during all larval transitions and morphogenesis. Acts with heterochronic genes, including members of the let-7 family, to regulate larval stage to adult transition. Acts synergistically with acn-1 in let-7 regulated postembryonic cell division of hypodermal seam cells. Acts in multiple pathways to influence daf-12 and daf-16 activity to in turn regulate physiological and reproductive processes such as body size and egg-laying. May play a role in neurotransmission. In Caenorhabditis elegans, this protein is Amyloid-beta-like protein.